The primary structure comprises 333 residues: DNA-directed RNA polymerase subunit alpha (333 aa).

The alpha N-terminal domain (alpha-NTD) stretch occupies residues 1-233; the sequence is MVREKVKVST…NLFIPFLHVE (233 aa). Residues 267–333 are alpha C-terminal domain (alpha-CTD); the sequence is LVFQYIFIDQ…LEKNRKFISN (67 aa).

It belongs to the RNA polymerase alpha chain family. As to quaternary structure, in plastids the minimal PEP RNA polymerase catalytic core is composed of four subunits: alpha, beta, beta', and beta''. When a (nuclear-encoded) sigma factor is associated with the core the holoenzyme is formed, which can initiate transcription.

Its subcellular location is the plastid. It localises to the chloroplast. The catalysed reaction is RNA(n) + a ribonucleoside 5'-triphosphate = RNA(n+1) + diphosphate. DNA-dependent RNA polymerase catalyzes the transcription of DNA into RNA using the four ribonucleoside triphosphates as substrates. The chain is DNA-directed RNA polymerase subunit alpha from Aethionema grandiflorum (Persian stone-cress).